The following is a 259-amino-acid chain: Adenosylcobinamide-GDP ribazoletransferase (259 aa).

7 consecutive transmembrane segments (helical) span residues Phe36–Leu56, Met65–Leu85, Ile108–Phe128, Leu133–Ile153, Gly175–Ile195, Ile201–Ile221, and Gly238–Ala258.

It belongs to the CobS family. Requires Mg(2+) as cofactor.

The protein resides in the cell inner membrane. It catalyses the reaction alpha-ribazole + adenosylcob(III)inamide-GDP = adenosylcob(III)alamin + GMP + H(+). The catalysed reaction is alpha-ribazole 5'-phosphate + adenosylcob(III)inamide-GDP = adenosylcob(III)alamin 5'-phosphate + GMP + H(+). The protein operates within cofactor biosynthesis; adenosylcobalamin biosynthesis; adenosylcobalamin from cob(II)yrinate a,c-diamide: step 7/7. Joins adenosylcobinamide-GDP and alpha-ribazole to generate adenosylcobalamin (Ado-cobalamin). Also synthesizes adenosylcobalamin 5'-phosphate from adenosylcobinamide-GDP and alpha-ribazole 5'-phosphate. In Prochlorococcus marinus (strain SARG / CCMP1375 / SS120), this protein is Adenosylcobinamide-GDP ribazoletransferase.